The following is a 279-amino-acid chain: MDDQRDLISNHEQLPILGNRPREPERCSRGALYTGVSVLVALLLAGQATTAYFLYQQQGRLDKLTITSQNLQLESLRMKLPKSAKPVSQMRMATPLLMRPMSMDNMLLGPVKNVTKYGNMTQDHVMHLLTRSGPLEYPQLKGTFPENLKHLKNSMDGVNWKIFESWMKQWLLFEMSKNSLEEKKPTEAPPKVLTKCQEEVSHIPAVYPGAFRPKCDENGNYLPLQCHGSTGYCWCVFPNGTEVPHTKSRGRHNCSEPLDMEDLSSGLGVTRQELGQVTL.

Residues 1–23 (MDDQRDLISNHEQLPILGNRPRE) are disordered. The Cytoplasmic portion of the chain corresponds to 1 to 29 (MDDQRDLISNHEQLPILGNRPREPERCSR). Ser-9 is subject to Phosphoserine. The chain crosses the membrane as a helical; Signal-anchor for type II membrane protein span at residues 30–55 (GALYTGVSVLVALLLAGQATTAYFLY). At 56-279 (QQQGRLDKLT…TRQELGQVTL (224 aa)) the chain is on the extracellular side. Residues Asn-113 and Asn-119 are each glycosylated (N-linked (GlcNAc...) asparagine). The 62-residue stretch at 193 to 254 (LTKCQEEVSH…HTKSRGRHNC (62 aa)) folds into the Thyroglobulin type-1 domain. Intrachain disulfides connect Cys-196–Cys-215, Cys-226–Cys-233, and Cys-235–Cys-254. The O-linked (Xyl...) (chondroitin sulfate) serine glycan is linked to Ser-265.

As to quaternary structure, nonamer composed of three alpha/beta/gamma heterotrimers. Interacts with CD44; this complex is essential for the MIF-induced signaling cascade that results in B cell survival. In terms of assembly, interacts with the mature form of CTSL; the complex survive in neutral pH environment. In terms of tissue distribution, expressed in thymus and lymph noodes. Expressed by antigen-presenting cells (APCs). Expressed in thymus and lymph noodes.

Its subcellular location is the late endosome. It localises to the lysosome. The protein localises to the cell membrane. The protein resides in the endoplasmic reticulum membrane. It is found in the golgi apparatus. Its subcellular location is the trans-Golgi network. It localises to the endosome. The protein localises to the secreted. Functionally, plays a critical role in MHC class II antigen processing by stabilizing peptide-free class II alpha/beta heterodimers in a complex soon after their synthesis and directing transport of the complex from the endoplasmic reticulum to compartments where peptide loading of class II takes place. Enhance also the stimulation of T-cell responses through interaction with CD44. In terms of biological role, stabilizes the conformation of mature CTSL by binding to its active site and serving as a chaperone to help maintain a pool of mature enzyme in endocytic compartments and extracellular space of antigen-presenting cells (APCs). Its function is as follows. Binds to the peptide-binding site of MHC class II alpha/beta heterodimers forming an alpha-beta-CLIP complex, thereby preventing the loading of antigenic peptides to the MHC class II complex until its release by HLA-DM in the endosome. This is H-2 class II histocompatibility antigen gamma chain from Mus musculus (Mouse).